We begin with the raw amino-acid sequence, 145 residues long: Acidic phospholipase A2 (145 aa).

A signal peptide spans 1–19; sequence MNPAHLLILSAVCVSLLGA. The propeptide occupies 20 to 27; sequence ANVPPQHL. Intrachain disulfides connect Cys38-Cys97, Cys52-Cys144, Cys54-Cys70, Cys69-Cys125, Cys76-Cys118, Cys86-Cys111, and Cys104-Cys116. Positions 53, 55, and 57 each coordinate Ca(2+). Residue His73 is part of the active site. Position 74 (Asp74) interacts with Ca(2+). The active site involves Asp119.

The protein belongs to the phospholipase A2 family. Group I subfamily. D49 sub-subfamily. Ca(2+) is required as a cofactor. Expressed by the venom gland.

It is found in the secreted. It catalyses the reaction a 1,2-diacyl-sn-glycero-3-phosphocholine + H2O = a 1-acyl-sn-glycero-3-phosphocholine + a fatty acid + H(+). Its function is as follows. PLA2 catalyzes the calcium-dependent hydrolysis of the 2-acyl groups in 3-sn-phosphoglycerides. The protein is Acidic phospholipase A2 of Bungarus multicinctus (Many-banded krait).